We begin with the raw amino-acid sequence, 92 residues long: Putative septation protein SpoVG (92 aa).

Belongs to the SpoVG family.

Could be involved in septation. The protein is Putative septation protein SpoVG of Clostridium botulinum (strain Eklund 17B / Type B).